The chain runs to 126 residues: uncharacterized protein (126 aa).

3 consecutive transmembrane segments (helical) span residues 4–24, 42–62, and 64–84; these read LIIAGILLLIKAMIFCIVNIL, AITIISSSVLYFLLSYYIINP, and ISASIIFDDCFSIFMLSSYTV.

The protein resides in the membrane. This is an uncharacterized protein from Saccharomyces cerevisiae (strain ATCC 204508 / S288c) (Baker's yeast).